Reading from the N-terminus, the 108-residue chain is DNA-directed RNA polymerase III subunit RPC10 (108 aa).

Zn(2+) is bound by residues Cys-5, Cys-8, Cys-25, Cys-28, Cys-69, and Cys-72. The C4-type zinc-finger motif lies at 5 to 28 (CPGCGNGLIVEEGQRCHRFACNTC). The TFIIS-type zinc-finger motif lies at 65–107 (TAESCPKCEHPRAYFMQLQTRSADEPMTTFYKCCNAQCGHRWR). Residues 88-89 (DE) carry the Hairpin motif. The Zn(2+) site is built by Cys-98 and Cys-102.

Belongs to the archaeal RpoM/eukaryotic RPA12/RPB9/RPC11 RNA polymerase family. In terms of assembly, component of the RNA polymerase III complex consisting of 17 subunits: a ten-subunit horseshoe-shaped catalytic core composed of POLR3A/RPC1, POLR3B/RPC2, POLR1C/RPAC1, POLR1D/RPAC2, POLR3K/RPC10, POLR2E/RPABC1, POLR2F/RPABC2, POLR2H/RPABC3, POLR2K/RPABC4 and POLR2L/RPABC5; a mobile stalk composed of two subunits POLR3H/RPC8 and CRCP/RPC9, protruding from the core and functioning primarily in transcription initiation; and additional subunits homologous to general transcription factors of the RNA polymerase II machinery, POLR3C/RPC3-POLR3F/RPC6-POLR3G/RPC7 heterotrimer required for transcription initiation and POLR3D/RPC4-POLR3E/RPC5 heterodimer involved in both transcription initiation and termination.

Its subcellular location is the nucleus. Core component of RNA polymerase III (Pol III) which synthesizes small non-coding RNAs using the four ribonucleoside triphosphates as substrates. Can mediate Pol I proofreading of the nascent RNA transcript. Anchors into the Pol III active site to constantly monitor transcription fidelity, cleaves mis-incorporated 5'-ribonucleotides and restarts the transcription process. Once Pol III reaches the poly(dT) termination signal, can induce Pol III clamp opening and transcription termination. Pol III plays an important role in sensing and limiting infection by intracellular bacteria and DNA viruses. Acts as a nuclear and cytosolic DNA sensor involved in innate immune response. Can sense non-self dsDNA that serves as template for transcription into dsRNA. The non-self RNA polymerase III transcripts, such as Epstein-Barr virus-encoded RNAs (EBERs) induce type I interferon and NF-kappa-B through the RIG-I pathway. The chain is DNA-directed RNA polymerase III subunit RPC10 from Homo sapiens (Human).